A 435-amino-acid polypeptide reads, in one-letter code: Serine--tRNA ligase (435 aa).

L-serine is bound at residue 242–244; sequence TAE. Position 273–275 (273–275) interacts with ATP; sequence RSE. Glutamate 296 contacts L-serine. 360-363 is a binding site for ATP; the sequence is EISS. Position 396 (serine 396) interacts with L-serine.

The protein belongs to the class-II aminoacyl-tRNA synthetase family. Type-1 seryl-tRNA synthetase subfamily. Homodimer. The tRNA molecule binds across the dimer.

The protein resides in the cytoplasm. The enzyme catalyses tRNA(Ser) + L-serine + ATP = L-seryl-tRNA(Ser) + AMP + diphosphate + H(+). It carries out the reaction tRNA(Sec) + L-serine + ATP = L-seryl-tRNA(Sec) + AMP + diphosphate + H(+). The protein operates within aminoacyl-tRNA biosynthesis; selenocysteinyl-tRNA(Sec) biosynthesis; L-seryl-tRNA(Sec) from L-serine and tRNA(Sec): step 1/1. Its function is as follows. Catalyzes the attachment of serine to tRNA(Ser). Is also able to aminoacylate tRNA(Sec) with serine, to form the misacylated tRNA L-seryl-tRNA(Sec), which will be further converted into selenocysteinyl-tRNA(Sec). The sequence is that of Serine--tRNA ligase from Vibrio vulnificus (strain YJ016).